Here is a 363-residue protein sequence, read N- to C-terminus: Flagellar P-ring protein (363 aa).

Positions 1 to 21 (MKTVINIFILFTFLASLSANA) are cleaved as a signal peptide.

It belongs to the FlgI family. The basal body constitutes a major portion of the flagellar organelle and consists of four rings (L,P,S, and M) mounted on a central rod.

The protein resides in the periplasm. It localises to the bacterial flagellum basal body. In terms of biological role, assembles around the rod to form the L-ring and probably protects the motor/basal body from shearing forces during rotation. In Colwellia psychrerythraea (strain 34H / ATCC BAA-681) (Vibrio psychroerythus), this protein is Flagellar P-ring protein.